A 436-amino-acid polypeptide reads, in one-letter code: UPF0597 protein YhaM (436 aa).

The protein belongs to the UPF0597 family.

This Salmonella newport (strain SL254) protein is UPF0597 protein YhaM.